The chain runs to 287 residues: ATP synthase gamma chain (287 aa).

The protein belongs to the ATPase gamma chain family. As to quaternary structure, F-type ATPases have 2 components, CF(1) - the catalytic core - and CF(0) - the membrane proton channel. CF(1) has five subunits: alpha(3), beta(3), gamma(1), delta(1), epsilon(1). CF(0) has three main subunits: a, b and c.

The protein resides in the cell inner membrane. Its function is as follows. Produces ATP from ADP in the presence of a proton gradient across the membrane. The gamma chain is believed to be important in regulating ATPase activity and the flow of protons through the CF(0) complex. The protein is ATP synthase gamma chain of Sodalis glossinidius (strain morsitans).